Reading from the N-terminus, the 391-residue chain is Aspartate aminotransferase (391 aa).

L-aspartate is bound by residues Gly-40 and Asn-176. At Lys-236 the chain carries N6-(pyridoxal phosphate)lysine. Arg-366 lines the L-aspartate pocket.

Belongs to the class-I pyridoxal-phosphate-dependent aminotransferase family. As to quaternary structure, homodimer. Requires pyridoxal 5'-phosphate as cofactor.

It is found in the cytoplasm. It carries out the reaction L-aspartate + 2-oxoglutarate = oxaloacetate + L-glutamate. In Pyrococcus horikoshii (strain ATCC 700860 / DSM 12428 / JCM 9974 / NBRC 100139 / OT-3), this protein is Aspartate aminotransferase (aspC).